We begin with the raw amino-acid sequence, 321 residues long: Glycerol-3-phosphate phosphatase (321 aa).

Asp-34 functions as the Nucleophile in the catalytic mechanism. Mg(2+) is bound by residues Asp-34, Asp-36, and Asp-260. Asp-36 (proton donor) is an active-site residue.

The protein belongs to the HAD-like hydrolase superfamily. CbbY/CbbZ/Gph/YieH family. Homodimer. Mg(2+) serves as cofactor. In terms of tissue distribution, detected in all tissues including red cells, lymphocytes and cultured fibroblasts (at protein level). The highest activities occur in skeletal muscle and cardiac muscle.

It carries out the reaction O-phospho-L-tyrosyl-[protein] + H2O = L-tyrosyl-[protein] + phosphate. The catalysed reaction is sn-glycerol 1-phosphate + H2O = glycerol + phosphate. The enzyme catalyses sn-glycerol 3-phosphate + H2O = glycerol + phosphate. Glycerol-3-phosphate phosphatase hydrolyzing glycerol-3-phosphate into glycerol. Thereby, regulates the cellular levels of glycerol-3-phosphate a metabolic intermediate of glucose, lipid and energy metabolism. Was also shown to have a 2-phosphoglycolate phosphatase activity and a tyrosine-protein phosphatase activity. However, their physiological relevance is unclear. In vitro, also has a phosphatase activity toward ADP, ATP, GDP and GTP. This Homo sapiens (Human) protein is Glycerol-3-phosphate phosphatase.